An 852-amino-acid chain; its full sequence is Taste receptor type 1 member 3 (852 aa).

An N-terminal signal peptide occupies residues 1 to 20 (MLGPAVLGLSLWALLHPGTG). At 21–570 (APLCLSQQLR…FLAWGEPAVL (550 aa)) the chain is on the extracellular side. N-linked (GlcNAc...) asparagine glycosylation is found at Asn-85, Asn-130, Asn-264, Asn-285, Asn-380, Asn-411, Asn-432, and Asn-475. Residues 536–545 (IACTFCGQDE) form a required for brazzein responsiveness region. Residues 571-591 (LLLLLLSLALGLVLAALGLFV) traverse the membrane as a helical segment. The Cytoplasmic portion of the chain corresponds to 592–603 (HHRDSPLVQASG). A helical membrane pass occupies residues 604 to 624 (GPLACFGLVCLGLVCLSVLLF). Residues 625–639 (PGQPSPARCLAQQPL) are Extracellular-facing. A helical transmembrane segment spans residues 640 to 660 (SHLPLTGCLSTLFLQAAEIFV). Topologically, residues 661-682 (ESELPLSWADRLSGCLRGPWAW) are cytoplasmic. A helical transmembrane segment spans residues 683–703 (LVVLLAMLVEVALCTWYLVAF). The Extracellular segment spans residues 704–729 (PPEVVTDWHMLPTEALVHCRTRSWVS). Residues 730-750 (FGLAHATNATLAFLCFLGTFL) form a helical membrane-spanning segment. Residues 751–762 (VRSQPGCYNRAR) lie on the Cytoplasmic side of the membrane. Residues 763 to 783 (GLTFAMLAYFITWVSFVPLLA) form a helical membrane-spanning segment. Residues 784 to 789 (NVQVVL) are Extracellular-facing. The chain crosses the membrane as a helical span at residues 790 to 810 (RPAVQMGALLLCVLGILAAFH). Residues 811–852 (LPRCYLLMRQPGLNTPEFFLGGGPGDAQGQNDGNTGNQGKHE) are Cytoplasmic-facing.

This sequence belongs to the G-protein coupled receptor 3 family. TAS1R subfamily. As to quaternary structure, forms homodimers or heterodimers with TAS1R1 and TAS1R2.

The protein resides in the cell membrane. Putative taste receptor. TAS1R1/TAS1R3 responds to the umami taste stimulus (the taste of monosodium glutamate). TAS1R2/TAS1R3 recognizes diverse natural and synthetic sweeteners. TAS1R3 is essential for the recognition and response to the disaccharide trehalose. Sequence differences within and between species can significantly influence the selectivity and specificity of taste responses. In Homo sapiens (Human), this protein is Taste receptor type 1 member 3 (TAS1R3).